The chain runs to 173 residues: Transcription factor E (173 aa).

The 84-residue stretch at 9 to 92 (NNPATRAYIH…LWQLRIDLLY (84 aa)) folds into the HTH TFE/IIEalpha-type domain.

Belongs to the TFE family. Monomer. Interaction with RNA polymerase subunits RpoF and RpoE is necessary for Tfe stimulatory transcription activity. Able to interact with Tbp and RNA polymerase in the absence of DNA promoter. Interacts both with the preinitiation and elongation complexes.

Its function is as follows. Transcription factor that plays a role in the activation of archaeal genes transcribed by RNA polymerase. Facilitates transcription initiation by enhancing TATA-box recognition by TATA-box-binding protein (Tbp), and transcription factor B (Tfb) and RNA polymerase recruitment. Not absolutely required for transcription in vitro, but particularly important in cases where Tbp or Tfb function is not optimal. It dynamically alters the nucleic acid-binding properties of RNA polymerases by stabilizing the initiation complex and destabilizing elongation complexes. Seems to translocate with the RNA polymerase following initiation and acts by binding to the non template strand of the transcription bubble in elongation complexes. The chain is Transcription factor E from Methanoregula boonei (strain DSM 21154 / JCM 14090 / 6A8).